Consider the following 222-residue polypeptide: Deoxyribose-phosphate aldolase (222 aa).

The active-site Proton donor/acceptor is the Asp-90. Lys-152 (schiff-base intermediate with acetaldehyde) is an active-site residue. The active-site Proton donor/acceptor is the Lys-181.

This sequence belongs to the DeoC/FbaB aldolase family. DeoC type 1 subfamily.

It localises to the cytoplasm. It catalyses the reaction 2-deoxy-D-ribose 5-phosphate = D-glyceraldehyde 3-phosphate + acetaldehyde. It functions in the pathway carbohydrate degradation; 2-deoxy-D-ribose 1-phosphate degradation; D-glyceraldehyde 3-phosphate and acetaldehyde from 2-deoxy-alpha-D-ribose 1-phosphate: step 2/2. In terms of biological role, catalyzes a reversible aldol reaction between acetaldehyde and D-glyceraldehyde 3-phosphate to generate 2-deoxy-D-ribose 5-phosphate. This chain is Deoxyribose-phosphate aldolase, found in Pectobacterium atrosepticum (strain SCRI 1043 / ATCC BAA-672) (Erwinia carotovora subsp. atroseptica).